Here is a 254-residue protein sequence, read N- to C-terminus: HLA class II histocompatibility antigen, DQ alpha 1 chain (254 aa).

Residues 1-23 form the signal peptide; it reads MILNKALMLGALALTTVMSPCGG. The interval 24 to 119 is alpha-1; sequence EDIVADHVAS…EVPEVTVFSK (96 aa). Residues 24–216 lie on the Extracellular side of the membrane; the sequence is EDIVADHVAS…IPAPMSELTE (193 aa). 2 N-linked (GlcNAc...) asparagine glycosylation sites follow: N103 and N143. Residues 112–204 enclose the Ig-like C1-type domain; sequence PEVTVFSKSP…LDKPLLKHWE (93 aa). The tract at residues 120–203 is alpha-2; sequence SPVTLGQPNI…GLDKPLLKHW (84 aa). Residues C132 and C188 are joined by a disulfide bond. The segment at 204-216 is connecting peptide; it reads EPEIPAPMSELTE. A helical membrane pass occupies residues 217 to 239; sequence TVVCALGLSVGLVGIVVGTVFII. The Cytoplasmic segment spans residues 240–254; sequence RGLRSVGASRHQGPL.

Belongs to the MHC class II family. Heterodimer of an alpha and a beta subunit; also referred as MHC class II molecule. In the endoplasmic reticulum (ER) it forms a heterononamer; 3 MHC class II molecules bind to a CD74 homotrimer (also known as invariant chain or HLA class II histocompatibility antigen gamma chain). In the endosomal/lysosomal system; CD74 undergoes sequential degradation by various proteases; leaving a small fragment termed CLIP on each MHC class II molecule. MHC class II molecule interacts with HLA_DM, and HLA_DO in B-cells, in order to release CLIP and facilitate the binding of antigenic peptides.

It localises to the cell membrane. The protein localises to the endoplasmic reticulum membrane. The protein resides in the golgi apparatus. Its subcellular location is the trans-Golgi network membrane. It is found in the endosome membrane. It localises to the lysosome membrane. Functionally, binds peptides derived from antigens that access the endocytic route of antigen presenting cells (APC) and presents them on the cell surface for recognition by the CD4 T-cells. The peptide binding cleft accommodates peptides of 10-30 residues. The peptides presented by MHC class II molecules are generated mostly by degradation of proteins that access the endocytic route, where they are processed by lysosomal proteases and other hydrolases. Exogenous antigens that have been endocytosed by the APC are thus readily available for presentation via MHC II molecules, and for this reason this antigen presentation pathway is usually referred to as exogenous. As membrane proteins on their way to degradation in lysosomes as part of their normal turn-over are also contained in the endosomal/lysosomal compartments, exogenous antigens must compete with those derived from endogenous components. Autophagy is also a source of endogenous peptides, autophagosomes constitutively fuse with MHC class II loading compartments. In addition to APCs, other cells of the gastrointestinal tract, such as epithelial cells, express MHC class II molecules and CD74 and act as APCs, which is an unusual trait of the GI tract. To produce a MHC class II molecule that presents an antigen, three MHC class II molecules (heterodimers of an alpha and a beta chain) associate with a CD74 trimer in the ER to form a heterononamer. Soon after the entry of this complex into the endosomal/lysosomal system where antigen processing occurs, CD74 undergoes a sequential degradation by various proteases, including CTSS and CTSL, leaving a small fragment termed CLIP (class-II-associated invariant chain peptide). The removal of CLIP is facilitated by HLA-DM via direct binding to the alpha-beta-CLIP complex so that CLIP is released. HLA-DM stabilizes MHC class II molecules until primary high affinity antigenic peptides are bound. The MHC II molecule bound to a peptide is then transported to the cell membrane surface. In B-cells, the interaction between HLA-DM and MHC class II molecules is regulated by HLA-DO. Primary dendritic cells (DCs) also to express HLA-DO. Lysosomal microenvironment has been implicated in the regulation of antigen loading into MHC II molecules, increased acidification produces increased proteolysis and efficient peptide loading. The polypeptide is HLA class II histocompatibility antigen, DQ alpha 1 chain (HLA-DQA1) (Homo sapiens (Human)).